Here is a 70-residue protein sequence, read N- to C-terminus: ATP synthase subunit c (70 aa).

2 consecutive transmembrane segments (helical) span residues 1-21 and 47-67; these read MNFL…SYGN and FIGV…SFLI.

The protein belongs to the ATPase C chain family. As to quaternary structure, F-type ATPases have 2 components, F(1) - the catalytic core - and F(0) - the membrane proton channel. F(1) has five subunits: alpha(3), beta(3), gamma(1), delta(1), epsilon(1). F(0) has three main subunits: a(1), b(2) and c(10-14). The alpha and beta chains form an alternating ring which encloses part of the gamma chain. F(1) is attached to F(0) by a central stalk formed by the gamma and epsilon chains, while a peripheral stalk is formed by the delta and b chains.

The protein localises to the cell membrane. F(1)F(0) ATP synthase produces ATP from ADP in the presence of a proton or sodium gradient. F-type ATPases consist of two structural domains, F(1) containing the extramembraneous catalytic core and F(0) containing the membrane proton channel, linked together by a central stalk and a peripheral stalk. During catalysis, ATP synthesis in the catalytic domain of F(1) is coupled via a rotary mechanism of the central stalk subunits to proton translocation. Functionally, key component of the F(0) channel; it plays a direct role in translocation across the membrane. A homomeric c-ring of between 10-14 subunits forms the central stalk rotor element with the F(1) delta and epsilon subunits. This Latilactobacillus sakei subsp. sakei (strain 23K) (Lactobacillus sakei subsp. sakei) protein is ATP synthase subunit c.